A 904-amino-acid polypeptide reads, in one-letter code: Serine/arginine repetitive matrix protein 1 (904 aa).

Methionine 1 carries the post-translational modification N-acetylmethionine. Positions 1–151 (MDAGFFRGTS…ASMKKQDEDK (151 aa)) are necessary for DNA and RNA-binding. Positions 1-156 (MDAGFFRGTS…QDEDKDKRDK (156 aa)) are necessary for mRNA 3'-end cleavage and cytoplasmic accumulation. Position 7 is a citrulline (arginine 7). The region spanning 27-126 (QLKFAECLEK…AGIPSAFLEL (100 aa)) is the PWI domain. Lysine 127 is covalently cross-linked (Glycyl lysine isopeptide (Lys-Gly) (interchain with G-Cter in SUMO2)). Basic and acidic residues predominate over residues 139 to 170 (EKLASMKKQDEDKDKRDKEEKESSREKRERSR). The tract at residues 139–904 (EKLASMKKQD…MRKAQVSPQS (766 aa)) is disordered. The residue at position 140 (lysine 140) is an N6-acetyllysine. Residues 171–207 (SPRRRKSRSPSPRRRSSPVRRERKRSHSRSPRHRTKS) show a composition bias toward basic residues. The span at 214–234 (PEKKEKTPELPEPSVKVKEPS) shows a compositional bias: basic and acidic residues. A Phosphothreonine modification is found at threonine 220. Serine 227 is subject to Phosphoserine. Lysine 231 participates in a covalent cross-link: Glycyl lysine isopeptide (Lys-Gly) (interchain with G-Cter in SUMO1); alternate. A Glycyl lysine isopeptide (Lys-Gly) (interchain with G-Cter in SUMO2); alternate cross-link involves residue lysine 231. Serine 234 and serine 240 each carry phosphoserine. Threonine 241 bears the Phosphothreonine mark. The segment covering 246 to 275 (KVPKPEPIPEPKEPSPEKNSKKEKEKEKTR) has biased composition (basic and acidic residues). A Glycyl lysine isopeptide (Lys-Gly) (interchain with G-Cter in SUMO2) cross-link involves residue lysine 249. Serine 260 bears the Phosphoserine mark. Composition is skewed to basic residues over residues 276–329 (PRSR…RTPP) and 336–351 (PRHR…RRRS). The segment at 300–688 (RRHRSRSRSY…NKRHSPSPRP (389 aa)) is necessary for speckles and matrix localization. Residues 352–368 (SASLSGSSSSSSSSRSR) show a composition bias toward low complexity. Phosphoserine is present on residues serine 389, serine 391, serine 393, and serine 402. Threonine 406 carries the post-translational modification Phosphothreonine. Serine 414 is modified (phosphoserine). Residue threonine 416 is modified to Phosphothreonine. A phosphoserine mark is found at serine 420, serine 429, serine 431, and serine 436. Positions 428-438 (VSVSPGRTSGK) are enriched in polar residues. Lysine 447 participates in a covalent cross-link: Glycyl lysine isopeptide (Lys-Gly) (interchain with G-Cter in SUMO2). 2 positions are modified to phosphoserine: serine 450 and serine 452. Residue lysine 459 forms a Glycyl lysine isopeptide (Lys-Gly) (interchain with G-Cter in SUMO2) linkage. Serine 463 and serine 465 each carry phosphoserine. Lysine 472 is covalently cross-linked (Glycyl lysine isopeptide (Lys-Gly) (interchain with G-Cter in SUMO2)). Serine 478 carries the post-translational modification Phosphoserine. The segment covering 478 to 501 (SVQQRRQYRRQNQQSSSDSGSSSS) has biased composition (low complexity). Basic and acidic residues predominate over residues 503 to 518 (EDERPKRSHVKNGEVG). Phosphoserine is present on residues serine 524, serine 526, serine 528, serine 530, serine 532, serine 549, and serine 551. The span at 533 to 560 (PRKRQKETSPRGRRRRSPSPPPTRRRRS) shows a compositional bias: basic residues. Residue threonine 555 is modified to Phosphothreonine. Residues serine 560 and serine 562 each carry the phosphoserine modification. The segment covering 567–592 (PRRRRTPTPPPRRRTPSPPPRRRSPS) has biased composition (basic residues). A phosphothreonine mark is found at threonine 572, threonine 574, and threonine 581. Position 583 is a phosphoserine (serine 583). Low complexity predominate over residues 593–605 (PRRYSPPIQRRYS). Position 596 is a phosphotyrosine (tyrosine 596). Phosphoserine is present on residues serine 597, serine 605, and serine 607. Threonine 614 bears the Phosphothreonine mark. A phosphoserine mark is found at serine 616, serine 626, serine 628, serine 636, and serine 638. The segment covering 621–636 (PKRRASPSPPPKRRVS) has biased composition (basic residues). Residues 649-663 (TKRRSPSLSSKHRKG) are compositionally biased toward basic residues. Phosphoserine is present on residues serine 694, serine 695, serine 696, serine 705, serine 707, serine 713, and serine 715. Composition is skewed to low complexity over residues 701 to 719 (RRGA…PSTR) and 736 to 759 (AASP…SPEP). Position 718 is a phosphothreonine (threonine 718). Phosphoserine is present on residues serine 738, serine 740, serine 748, serine 752, serine 754, serine 756, serine 769, serine 773, serine 775, and serine 777. Residues 771-786 (VQSQSPSTNWSPAVPV) are compositionally biased toward low complexity. Threonine 778 carries the phosphothreonine modification. Serine 781 and serine 791 each carry phosphoserine. Threonine 793 is modified (phosphothreonine). A phosphoserine mark is found at serine 795, serine 797, and serine 802. A compositionally biased stretch (basic residues) spans 809–834 (KKKKKKKDKKHKKDKKHKKHKKHKKE). Residues 837–866 (VAAAAAAAVTPAAIAAATTTLAQEEPVAAP) show a composition bias toward low complexity. Residue lysine 869 forms a Glycyl lysine isopeptide (Lys-Gly) (interchain with G-Cter in SUMO2) linkage. At threonine 872 the chain carries Phosphothreonine. A Phosphoserine modification is found at serine 874. The span at 882–892 (DLEKHLREKAL) shows a compositional bias: basic and acidic residues. Serine 901 carries the post-translational modification Phosphoserine.

This sequence belongs to the splicing factor SR family. Identified in the spliceosome C complex. Found in a pre-mRNA splicing complex with SFRS4, SFRS5, SNRP70, SNRPA1, SRRM1 and SRRM2. Found in a pre-mRNA exonic splicing enhancer (ESE) complex with SNRP70, SNRPA1, SRRM1 and TRA2B/SFRS10. Component of the minor spliceosome, which splices U12-type introns. Found in a mRNA splicing-dependent exon junction complex (EJC) with DEK, PRPF8, NCBP1, RBM8A, RNPS1, SRRM1 and ALYREF/THOC4. Interacts with DDX39B, CPSF1, RBM8A, RNPS1, and ALYREF/THOC4. Seems to be a compound of RNA export complexes that are released from speckles in a ATP-dependent manner. Phosphorylated on multiple serine and threonine residues by DYRK3 during the G2-to-M transition, after the nuclear-envelope breakdown. Phosphorylation by DYRK3 promotes disassembly of nuclear speckles. In terms of processing, citrullinated by PADI4.

Its subcellular location is the nucleus matrix. It is found in the nucleus speckle. Functionally, part of pre- and post-splicing multiprotein mRNP complexes. As a component of the minor spliceosome, involved in the splicing of U12-type introns in pre-mRNAs. Involved in numerous pre-mRNA processing events. Promotes constitutive and exonic splicing enhancer (ESE)-dependent splicing activation by bridging together sequence-specific (SR family proteins, SFRS4, SFRS5 and TRA2B/SFRS10) and basal snRNP (SNRP70 and SNRPA1) factors of the spliceosome. Stimulates mRNA 3'-end cleavage independently of the formation of an exon junction complex. Binds both pre-mRNA and spliced mRNA 20-25 nt upstream of exon-exon junctions. Binds RNA and DNA with low sequence specificity and has similar preference for either double- or single-stranded nucleic acid substrates. The polypeptide is Serine/arginine repetitive matrix protein 1 (SRRM1) (Homo sapiens (Human)).